A 158-amino-acid polypeptide reads, in one-letter code: Probable transcription regulator ArfM (158 aa).

Activates, in anaerobic conditions, the transcription of the fermentative operons lctEP and alsDS, of the hmp gene encoding a flavohemoglobin-like protein, the nitrite reductase operon nasDE and the heme biosynthesis genes hemN and hemZ. In Bacillus subtilis (strain 168), this protein is Probable transcription regulator ArfM (arfM).